The primary structure comprises 375 residues: Putative serine protease 47 (375 aa).

A signal peptide spans 1 to 23; the sequence is MGYCQGVSQVAVVLLMFPKEKEA. Residues 41-60 are disordered; that stretch reads DGQLPMGPHSRASQVAPETT. The segment covering 51–60 has biased composition (polar residues); that stretch reads RASQVAPETT. The 243-residue stretch at 81–323 folds into the Peptidase S1 domain; the sequence is IYGGRDAAAG…FINWIDEIMR (243 aa). A disulfide bond links Cys-106 and Cys-122. Active-site charge relay system residues include His-121 and Asp-172. Asn-183 and Asn-203 each carry an N-linked (GlcNAc...) asparagine glycan. Cys-206 and Cys-281 form a disulfide bridge. The active-site Charge relay system is the Ser-275.

Belongs to the peptidase S1 family.

Its subcellular location is the secreted. This chain is Putative serine protease 47 (PRSS47P), found in Homo sapiens (Human).